The sequence spans 276 residues: MGIKNLNSVTASLRGTVLLDKSMLWKGKPEKSLVSYKISCGGRNSRGVITVRHRGRGHKRLYRIIDFKRNKVGVSATVERLEYDPNRTAFIALLSYDDGEKSYIIAPNGLKKGDVVISGEGSDILPGNCLMLKSIPVGTFVHNVELRPGNGGVIARSAGTYAQLMSKDGVYVLLRLSSGEIRKVLSDCRATIGIVSNLDNQNVKLGKAGRNRWLGIRPTVRGVAMNPIDHPHGGGEGKTSGGRNPVTPWGVPTKGKKTRKRNKSSNKYIKRVSDKG.

A disordered region spans residues 224 to 276 (AMNPIDHPHGGGEGKTSGGRNPVTPWGVPTKGKKTRKRNKSSNKYIKRVSDKG). Residues 254–270 (KGKKTRKRNKSSNKYIK) show a composition bias toward basic residues.

Belongs to the universal ribosomal protein uL2 family. As to quaternary structure, part of the 50S ribosomal subunit. Forms a bridge to the 30S subunit in the 70S ribosome.

One of the primary rRNA binding proteins. Required for association of the 30S and 50S subunits to form the 70S ribosome, for tRNA binding and peptide bond formation. It has been suggested to have peptidyltransferase activity; this is somewhat controversial. Makes several contacts with the 16S rRNA in the 70S ribosome. In Ehrlichia canis (strain Jake), this protein is Large ribosomal subunit protein uL2.